We begin with the raw amino-acid sequence, 397 residues long: Dimethyladenosine transferase 2, mitochondrial (397 aa).

The transit peptide at 1–44 directs the protein to the mitochondrion; sequence MRGLAMRLPPRLALSVLAGRGPSCILGSGAATRKDWQERNRRSF. Positions 75, 124, and 150 each coordinate S-adenosyl-L-methionine. Residues 329–330 are DNA-binding; that stretch reads KR.

It belongs to the class I-like SAM-binding methyltransferase superfamily. rRNA adenine N(6)-methyltransferase family. KsgA subfamily. As to quaternary structure, homodimer. Component of the mitochondrial transcription initiation complex, composed at least of TFB2M, TFAM and POLRMT. In this complex TFAM recruits POLRMT to the promoter whereas TFB2M induces structural changes in POLRMT to enable promoter opening and trapping of the DNA non-template strand. Interacts with mitochondrial RNA polymerase POLRMT. Interacts with TFAM.

It localises to the mitochondrion. It carries out the reaction adenosine in rRNA + S-adenosyl-L-methionine = N(6)-methyladenosine in rRNA + S-adenosyl-L-homocysteine + H(+). In terms of biological role, S-adenosyl-L-methionine-dependent rRNA methyltransferase which may methylate two specific adjacent adenosines in the loop of a conserved hairpin near the 3'-end of 12S mitochondrial rRNA. Component of the mitochondrial transcription initiation complex, composed at least of TFB2M, TFAM and POLRMT that is required for basal transcription of mitochondrial DNA. In this complex TFAM recruits POLRMT to a specific promoter whereas TFB2M induces structural changes in POLRMT to enable promoter opening and trapping of the DNA non-template strand. Stimulates transcription independently of the methyltransferase activity. In Rattus norvegicus (Rat), this protein is Dimethyladenosine transferase 2, mitochondrial.